The sequence spans 362 residues: Biotin synthase (362 aa).

A Radical SAM core domain is found at 46–273 (NEVQVSTLLS…ASHVRLSAGR (228 aa)). The [4Fe-4S] cluster site is built by C61, C65, and C68. [2Fe-2S] cluster contacts are provided by C105, C136, C196, and R268. Positions 320 to 339 (PAQRAQKPDQVQEEELLAEV) are disordered.

The protein belongs to the radical SAM superfamily. Biotin synthase family. As to quaternary structure, homodimer. [4Fe-4S] cluster serves as cofactor. The cofactor is [2Fe-2S] cluster.

The catalysed reaction is (4R,5S)-dethiobiotin + (sulfur carrier)-SH + 2 reduced [2Fe-2S]-[ferredoxin] + 2 S-adenosyl-L-methionine = (sulfur carrier)-H + biotin + 2 5'-deoxyadenosine + 2 L-methionine + 2 oxidized [2Fe-2S]-[ferredoxin]. The protein operates within cofactor biosynthesis; biotin biosynthesis; biotin from 7,8-diaminononanoate: step 2/2. In terms of biological role, catalyzes the conversion of dethiobiotin (DTB) to biotin by the insertion of a sulfur atom into dethiobiotin via a radical-based mechanism. This Aeromonas hydrophila subsp. hydrophila (strain ATCC 7966 / DSM 30187 / BCRC 13018 / CCUG 14551 / JCM 1027 / KCTC 2358 / NCIMB 9240 / NCTC 8049) protein is Biotin synthase.